The chain runs to 220 residues: Large ribosomal subunit protein uL1 (220 aa).

It belongs to the universal ribosomal protein uL1 family. As to quaternary structure, part of the 50S ribosomal subunit.

Binds directly to 23S rRNA. The L1 stalk is quite mobile in the ribosome, and is involved in E site tRNA release. Its function is as follows. Protein L1 is also a translational repressor protein, it controls the translation of the L11 operon by binding to its mRNA. This chain is Large ribosomal subunit protein uL1, found in Ehrlichia ruminantium (strain Gardel).